Consider the following 355-residue polypeptide: Peptide chain release factor 1 (355 aa).

Q233 carries the post-translational modification N5-methylglutamine. Residues 281-293 (RRNKEQERADSRR) are compositionally biased toward basic and acidic residues. Residues 281-308 (RRNKEQERADSRRGQIGSGDRSERIRTY) are disordered.

The protein belongs to the prokaryotic/mitochondrial release factor family. Post-translationally, methylated by PrmC. Methylation increases the termination efficiency of RF1.

The protein localises to the cytoplasm. Peptide chain release factor 1 directs the termination of translation in response to the peptide chain termination codons UAG and UAA. The sequence is that of Peptide chain release factor 1 from Rickettsia akari (strain Hartford).